Reading from the N-terminus, the 152-residue chain is Methylglyoxal synthase (152 aa).

Residues 1 to 152 (MELTTRTIAA…YDRYLQQRLK (152 aa)) form the MGS-like domain. Substrate contacts are provided by residues His-19, Lys-23, 45–48 (TGTT), and 65–66 (SG). Asp-71 serves as the catalytic Proton donor/acceptor. His-98 provides a ligand contact to substrate.

It belongs to the methylglyoxal synthase family.

The enzyme catalyses dihydroxyacetone phosphate = methylglyoxal + phosphate. Its function is as follows. Catalyzes the formation of methylglyoxal from dihydroxyacetone phosphate. The polypeptide is Methylglyoxal synthase (Yersinia enterocolitica serotype O:8 / biotype 1B (strain NCTC 13174 / 8081)).